A 171-amino-acid chain; its full sequence is Neudesin (171 aa).

The first 30 residues, 1–30 (MARPAPWWRLRLLAALVLALALVPVPSAWA), serve as a signal peptide directing secretion. The Cytochrome b5 heme-binding domain maps to 43 to 128 (VRLFTEEELA…KELEALDDVF (86 aa)). Residue Lys135 is modified to N6-acetyllysine.

This sequence belongs to the cytochrome b5 family. MAPR subfamily. Interacts with PINK1 and PARK7. In the embryo, expressed most abundantly in brain and spinal cord. Widely expressed in adult tissues including brain, heart, lung and kidney. In brain, expressed in neurons but not in glial cells. In the hypothalamus is expressed primarily in the paraventricular nucleus (PVN), with lower levels of expression in the arcuate nucleus (ARC).

The protein resides in the secreted. The protein localises to the extracellular space. It localises to the mitochondrion. It is found in the endoplasmic reticulum. Acts as a neurotrophic factor in postnatal mature neurons, enhancing neuronal survival. Promotes cell proliferation and neurogenesis in undifferentiated neural pro-genitor cells at the embryonic stage and inhibits differentiation of astrocytes. Its neurotrophic activity is exerted via MAPK1/ERK2, MAPK3/ERK1 and AKT1/AKT pathways. Neurotrophic activity is enhanced by binding to heme. Also acts as an anorexigenic neurotrophic factor that contributes to energy balance. This chain is Neudesin, found in Mus musculus (Mouse).